A 458-amino-acid chain; its full sequence is Retinoic acid receptor gamma (458 aa).

The tract at residues 1-89 (MATNKERLFA…PPPPPRVYKP (89 aa)) is modulating. R34 is subject to Omega-N-methylarginine. A disordered region spans residues 58 to 83 (MASLSVETQSTSSEEMVPSSPSPPPP). Residues 62 to 71 (SVETQSTSSE) show a composition bias toward polar residues. NR C4-type zinc fingers lie at residues 90-110 (CFVC…CEGC) and 126-150 (CHRD…LQKC). A DNA-binding region (nuclear receptor) is located at residues 90 to 155 (CFVCNDKSSG…RLQKCFEVGM (66 aa)). The segment at 156-184 (SKEAVRNDRNKKKKEVKEEGSPDSYELSP) is hinge. The tract at residues 161-180 (RNDRNKKKKEVKEEGSPDSY) is disordered. Residues K172 and K401 each participate in a glycyl lysine isopeptide (Lys-Gly) (interchain with G-Cter in SUMO2) cross-link. One can recognise an NR LBD domain in the interval 185–419 (QLEELITKVS…PLIREMLENP (235 aa)). The segment at 409–458 (PPLIREMLENPEMFEDDSSKPGPHPKASSEDEAPGGQGKRGQSPQPDQGP) is disordered. Over residues 448 to 458 (RGQSPQPDQGP) the composition is skewed to polar residues.

It belongs to the nuclear hormone receptor family. NR1 subfamily. Homodimer. Heterodimer with a RXR molecule. Binds DNA preferentially as a RAR/RXR heterodimer. Forms a complex with PUS1 and the SRA1 RNA in the nucleus.

It is found in the nucleus. It localises to the cytoplasm. Its function is as follows. Receptor for retinoic acid. Retinoic acid receptors bind as heterodimers to their target response elements in response to their ligands, all-trans or 9-cis retinoic acid, and regulate gene expression in various biological processes. The RAR/RXR heterodimers bind to the retinoic acid response elements (RARE) composed of tandem 5'-AGGTCA-3' sites known as DR1-DR5. In the absence of ligand, acts mainly as an activator of gene expression due to weak binding to corepressors. Required for limb bud development. In concert with RARA or RARB, required for skeletal growth, matrix homeostasis and growth plate function. This is Retinoic acid receptor gamma (Rarg) from Mus musculus (Mouse).